Reading from the N-terminus, the 442-residue chain is Probable D-serine dehydratase (442 aa).

At Lys115 the chain carries N6-(pyridoxal phosphate)lysine.

It belongs to the serine/threonine dehydratase family. DsdA subfamily. It depends on pyridoxal 5'-phosphate as a cofactor.

It catalyses the reaction D-serine = pyruvate + NH4(+). The chain is Probable D-serine dehydratase from Halalkalibacterium halodurans (strain ATCC BAA-125 / DSM 18197 / FERM 7344 / JCM 9153 / C-125) (Bacillus halodurans).